The following is a 269-amino-acid chain: Shikimate dehydrogenase (NADP(+)) (269 aa).

Shikimate is bound by residues S13 to S15 and T60. The Proton acceptor role is filled by K64. E76 lines the NADP(+) pocket. Shikimate-binding residues include N85 and D100. Residues G124–A128, N148–R153, and I209 contribute to the NADP(+) site. Y211 contacts shikimate. G232 contributes to the NADP(+) binding site. Q239 contributes to the shikimate binding site.

The protein belongs to the shikimate dehydrogenase family. As to quaternary structure, monomer or homodimer.

It catalyses the reaction shikimate + NADP(+) = 3-dehydroshikimate + NADPH + H(+). The protein operates within metabolic intermediate biosynthesis; chorismate biosynthesis; chorismate from D-erythrose 4-phosphate and phosphoenolpyruvate: step 4/7. Involved in the biosynthesis of the chorismate, which leads to the biosynthesis of aromatic amino acids. Catalyzes the reversible NADPH linked reduction of 3-dehydroshikimate (DHSA) to yield shikimate (SA). It can also use NAD to oxidize shikimate. This is Shikimate dehydrogenase (NADP(+)) from Staphylococcus epidermidis (strain ATCC 35984 / DSM 28319 / BCRC 17069 / CCUG 31568 / BM 3577 / RP62A).